We begin with the raw amino-acid sequence, 422 residues long: Probable isoprenylcysteine alpha-carbonyl methylesterase ICMEL2 (422 aa).

Basic and acidic residues predominate over residues 1–16; sequence MQLSPERCRPMSENRE. A disordered region spans residues 1–55; it reads MQLSPERCRPMSENREAWSANSEEMELLHGSNRLSSPEHVRRRVSGNSSEDGSPR. A run of 2 helical transmembrane segments spans residues 97 to 117 and 152 to 172; these read LLALACYAMLLMPGFLQVAYL and VVVFVTGGAWIIGYKAWGSLL. Substrate is bound by residues 158 to 160 and 229 to 231; these read GGA and QSA. Active-site residues include serine 230, aspartate 331, and histidine 363.

This sequence belongs to the AB hydrolase superfamily. Isoprenylcysteine methylesterase family. In terms of tissue distribution, expressed at low levels in flowers and siliques.

It is found in the endoplasmic reticulum membrane. The protein localises to the golgi apparatus membrane. The enzyme catalyses [protein]-C-terminal S-[(2E,6E)-farnesyl]-L-cysteine methyl ester + H2O = [protein]-C-terminal S-[(2E,6E)-farnesyl]-L-cysteine + methanol + H(+). Catalyzes the demethylation of isoprenylcysteine methylesters. May act as a negative regulator of ABA signaling. In Arabidopsis thaliana (Mouse-ear cress), this protein is Probable isoprenylcysteine alpha-carbonyl methylesterase ICMEL2.